Reading from the N-terminus, the 141-residue chain is Large ribosomal subunit protein uL16c (141 aa).

Residues 1–17 (MLSPKRTKYRKPHRGNR) are compositionally biased toward basic residues. The interval 1–21 (MLSPKRTKYRKPHRGNRKGQA) is disordered.

Belongs to the universal ribosomal protein uL16 family. Part of the 50S ribosomal subunit.

Its subcellular location is the plastid. The protein localises to the chloroplast. The polypeptide is Large ribosomal subunit protein uL16c (Ostreococcus tauri).